The following is a 469-amino-acid chain: Tryptophan biosynthesis protein TrpCF (469 aa).

Residues 1–257 are indole-3-glycerol phosphate synthase; the sequence is MNSILKEIIN…EAVCKMILGN (257 aa). Positions 258 to 469 are N-(5'-phosphoribosyl)anthranilate isomerase; sequence NKICGLTQSS…YRNLICLGKK (212 aa).

In the N-terminal section; belongs to the TrpC family. This sequence in the C-terminal section; belongs to the TrpF family. In terms of assembly, monomer.

It carries out the reaction N-(5-phospho-beta-D-ribosyl)anthranilate = 1-(2-carboxyphenylamino)-1-deoxy-D-ribulose 5-phosphate. The catalysed reaction is 1-(2-carboxyphenylamino)-1-deoxy-D-ribulose 5-phosphate + H(+) = (1S,2R)-1-C-(indol-3-yl)glycerol 3-phosphate + CO2 + H2O. It functions in the pathway amino-acid biosynthesis; L-tryptophan biosynthesis; L-tryptophan from chorismate: step 3/5. Its pathway is amino-acid biosynthesis; L-tryptophan biosynthesis; L-tryptophan from chorismate: step 4/5. Bifunctional enzyme that catalyzes two sequential steps of tryptophan biosynthetic pathway. The first reaction is catalyzed by the isomerase, coded by the TrpF domain; the second reaction is catalyzed by the synthase, coded by the TrpC domain. The sequence is that of Tryptophan biosynthesis protein TrpCF (trpC) from Buchnera aphidicola subsp. Baizongia pistaciae (strain Bp).